A 114-amino-acid polypeptide reads, in one-letter code: Pole-localizer protein TmaR (114 aa).

Positions 70 to 111 (RDDYESRVDDYTIRNAELSKQRREASTKMKEQKKAHAELLKN) form a coiled coil. The segment at 89 to 114 (KQRREASTKMKEQKKAHAELLKNAEK) is disordered.

The protein belongs to the pole-localizer TmaR family.

The protein resides in the cytoplasm. Its function is as follows. Pole-localizer protein involved in the regulation of several cellular processes. The sequence is that of Pole-localizer protein TmaR from Haemophilus influenzae (strain 86-028NP).